We begin with the raw amino-acid sequence, 326 residues long: Biotin synthase (326 aa).

Residues 42 to 266 (NEIQLAALLN…LMPKSYVRLA (225 aa)) form the Radical SAM core domain. [4Fe-4S] cluster is bound by residues cysteine 57, cysteine 61, and cysteine 64. The [2Fe-2S] cluster site is built by cysteine 101, cysteine 132, cysteine 192, and arginine 264.

The protein belongs to the radical SAM superfamily. Biotin synthase family. Homodimer. It depends on [4Fe-4S] cluster as a cofactor. [2Fe-2S] cluster is required as a cofactor.

The catalysed reaction is (4R,5S)-dethiobiotin + (sulfur carrier)-SH + 2 reduced [2Fe-2S]-[ferredoxin] + 2 S-adenosyl-L-methionine = (sulfur carrier)-H + biotin + 2 5'-deoxyadenosine + 2 L-methionine + 2 oxidized [2Fe-2S]-[ferredoxin]. The protein operates within cofactor biosynthesis; biotin biosynthesis; biotin from 7,8-diaminononanoate: step 2/2. Catalyzes the conversion of dethiobiotin (DTB) to biotin by the insertion of a sulfur atom into dethiobiotin via a radical-based mechanism. In Ehrlichia chaffeensis (strain ATCC CRL-10679 / Arkansas), this protein is Biotin synthase.